Here is a 486-residue protein sequence, read N- to C-terminus: Protein hold'em (486 aa).

Positions 166–285 form a DNA-binding region, OB; it reads IITTNVNLLV…DCRLLLAFAA (120 aa).

It belongs to the MEIOB family. In terms of assembly, interacts with mei-9 and Ercc1.

Its function is as follows. Single-stranded DNA-binding protein required for meiosis. May be involved in the resolution of recombination intermediates into crossovers in the meiotic recombination pathway. The polypeptide is Protein hold'em (hdm) (Drosophila melanogaster (Fruit fly)).